The primary structure comprises 423 residues: Galactosylceramide sulfotransferase (423 aa).

Topologically, residues 1–14 (MPLPQKKRWESMAK) are cytoplasmic. Residues 15 to 35 (GLVLGALFTSFLLLLYSYAVP) form a helical; Signal-anchor for type II membrane protein membrane-spanning segment. Residues 36-423 (PLYTGLASTT…WKFIRDFLRW (388 aa)) lie on the Lumenal side of the membrane. Positions 48-70 (GAAPCSPAPREPEAPTSANGSAG) are disordered. 3 N-linked (GlcNAc...) asparagine glycosylation sites follow: Asn-66, Asn-156, and Asn-312.

Belongs to the galactose-3-O-sulfotransferase family.

Its subcellular location is the golgi apparatus membrane. The enzyme catalyses a beta-D-galactosyl-(1&lt;-&gt;1')-N-acylsphing-4-enine + 3'-phosphoadenylyl sulfate = an N-acyl-1-beta-D-(3-O-sulfo)-galactosyl-sphing-4-enine + adenosine 3',5'-bisphosphate + H(+). It carries out the reaction a 1-O-alkyl-2-acyl-3-O-(beta-D-galactosyl)-sn-glycerol + 3'-phosphoadenylyl sulfate = a 1-O-alkyl-2-acyl-3-(beta-D-3-sulfogalactosyl)-sn-glycerol + adenosine 3',5'-bisphosphate + H(+). It catalyses the reaction a beta-D-Gal-(1&lt;-&gt;1')-ceramide + 3'-phosphoadenylyl sulfate = 1-(3-O-sulfo-beta-D-galactosyl)-ceramide + adenosine 3',5'-bisphosphate + H(+). The catalysed reaction is a 1,2-diacyl-3-O-(beta-D-galactosyl)-sn-glycerol + 3'-phosphoadenylyl sulfate = 1,2-diacyl-3-(3-O-sulfo-beta-D-galactosyl)-sn-glycerol + adenosine 3',5'-bisphosphate + H(+). The enzyme catalyses a beta-D-Gal-(1-&gt;4)-beta-D-Glc-(1&lt;-&gt;1)-Cer(d18:1(4E)) + 3'-phosphoadenylyl sulfate = beta-D-3-sulfogalactosyl-(1-&gt;4)-beta-D-glucosyl-(1&lt;-&gt;1')-N-acylsphing-4-enine + adenosine 3',5'-bisphosphate + H(+). It functions in the pathway lipid metabolism; sphingolipid metabolism. In terms of biological role, catalyzes the transfer of a sulfate group to position 3 of non-reducing beta-galactosyl residues in glycerolipids and sphingolipids, therefore participates in the biosynthesis of sulfoglycolipids. Catalyzes the synthesis of galactosylceramide sulfate (sulfatide), a major lipid component of the myelin sheath and of monogalactosylalkylacylglycerol sulfate (seminolipid), present in spermatocytes. Seems to prefer beta-glycosides at the non-reducing termini of sugar chains attached to a lipid moiety. Also acts on lactosylceramide, galactosyl 1-alkyl-2-sn-glycerol and galactosyl diacylglycerol (in vitro). The protein is Galactosylceramide sulfotransferase of Bos taurus (Bovine).